A 225-amino-acid polypeptide reads, in one-letter code: Chlorosome protein J (225 aa).

The region spanning 1-95 is the 2Fe-2S ferredoxin-type domain; the sequence is MIIYINDKPC…TIRVLTRAEK (95 aa). [2Fe-2S] cluster is bound by residues Cys-33, Cys-39, Cys-42, and Cys-77.

[2Fe-2S] cluster is required as a cofactor.

It is found in the chlorosome. In terms of biological role, could play a direct role in the oxidation or reduction of the quenching species formed in the chlorosome. The protein is Chlorosome protein J (csmJ) of Chlorobaculum tepidum (strain ATCC 49652 / DSM 12025 / NBRC 103806 / TLS) (Chlorobium tepidum).